The sequence spans 240 residues: UDP-2,3-diacylglucosamine hydrolase (240 aa).

Residues Asp8, His10, Asp41, Asn78, and His113 each contribute to the Mn(2+) site. Substrate is bound at residue 78 to 79; that stretch reads NR. Substrate-binding residues include Asp121, Ser159, Asn163, Lys166, and His194. Mn(2+) is bound by residues His194 and His196.

This sequence belongs to the LpxH family. The cofactor is Mn(2+).

It localises to the cell inner membrane. The catalysed reaction is UDP-2-N,3-O-bis[(3R)-3-hydroxytetradecanoyl]-alpha-D-glucosamine + H2O = 2-N,3-O-bis[(3R)-3-hydroxytetradecanoyl]-alpha-D-glucosaminyl 1-phosphate + UMP + 2 H(+). It participates in glycolipid biosynthesis; lipid IV(A) biosynthesis; lipid IV(A) from (3R)-3-hydroxytetradecanoyl-[acyl-carrier-protein] and UDP-N-acetyl-alpha-D-glucosamine: step 4/6. Its function is as follows. Hydrolyzes the pyrophosphate bond of UDP-2,3-diacylglucosamine to yield 2,3-diacylglucosamine 1-phosphate (lipid X) and UMP by catalyzing the attack of water at the alpha-P atom. Involved in the biosynthesis of lipid A, a phosphorylated glycolipid that anchors the lipopolysaccharide to the outer membrane of the cell. The protein is UDP-2,3-diacylglucosamine hydrolase of Shewanella baltica (strain OS185).